The sequence spans 364 residues: Programmed cell death protein 2-like (364 aa).

Alanine 2 carries the post-translational modification N-acetylalanine. The interval 125–150 (EGSQDWGSDTEETPPPPASDLGSDSN) is disordered.

In terms of biological role, over-expression suppresses AP1, CREB, NFAT, and NF-kB transcriptional activation, and delays cell cycle progression at S phase. This is Programmed cell death protein 2-like (Pdcd2l) from Mus musculus (Mouse).